Reading from the N-terminus, the 167-residue chain is MLPMITEFINYGQQTIRAARYIGQGFMITLSHANRLPVTIQYPYEKLITSERFRGRIHFEFDKCIACEVCVRVCPIDLPVVDWKLETDIRKKRLLNYSIDFGICIFCGNCVEYCPTNCLSMTEEYELSTYDRHELNYNQIALGRLPMSVIDDYTIRTISNLPQINNE.

2 consecutive 4Fe-4S ferredoxin-type domains span residues 55-84 (GRIHFEFDKCIACEVCVRVCPIDLPVVDWK) and 95-124 (LNYSIDFGICIFCGNCVEYCPTNCLSMTEE). 8 residues coordinate [4Fe-4S] cluster: cysteine 64, cysteine 67, cysteine 70, cysteine 74, cysteine 104, cysteine 107, cysteine 110, and cysteine 114.

Belongs to the complex I 23 kDa subunit family. In terms of assembly, NDH is composed of at least 16 different subunits, 5 of which are encoded in the nucleus. It depends on [4Fe-4S] cluster as a cofactor.

It is found in the plastid. The protein resides in the chloroplast thylakoid membrane. The catalysed reaction is a plastoquinone + NADH + (n+1) H(+)(in) = a plastoquinol + NAD(+) + n H(+)(out). It carries out the reaction a plastoquinone + NADPH + (n+1) H(+)(in) = a plastoquinol + NADP(+) + n H(+)(out). Functionally, NDH shuttles electrons from NAD(P)H:plastoquinone, via FMN and iron-sulfur (Fe-S) centers, to quinones in the photosynthetic chain and possibly in a chloroplast respiratory chain. The immediate electron acceptor for the enzyme in this species is believed to be plastoquinone. Couples the redox reaction to proton translocation, and thus conserves the redox energy in a proton gradient. The polypeptide is NAD(P)H-quinone oxidoreductase subunit I, chloroplastic (Solanum tuberosum (Potato)).